The primary structure comprises 179 residues: Large ribosomal subunit protein uL5 (179 aa).

This sequence belongs to the universal ribosomal protein uL5 family. As to quaternary structure, part of the 50S ribosomal subunit; part of the 5S rRNA/L5/L18/L25 subcomplex. Contacts the 5S rRNA and the P site tRNA. Forms a bridge to the 30S subunit in the 70S ribosome.

In terms of biological role, this is one of the proteins that bind and probably mediate the attachment of the 5S RNA into the large ribosomal subunit, where it forms part of the central protuberance. In the 70S ribosome it contacts protein S13 of the 30S subunit (bridge B1b), connecting the 2 subunits; this bridge is implicated in subunit movement. Contacts the P site tRNA; the 5S rRNA and some of its associated proteins might help stabilize positioning of ribosome-bound tRNAs. This is Large ribosomal subunit protein uL5 from Cellvibrio japonicus (strain Ueda107) (Pseudomonas fluorescens subsp. cellulosa).